The primary structure comprises 88 residues: U-scoloptoxin(12)-Sa1a (88 aa).

A signal peptide spans 1–20; the sequence is MKYMIITVVILFTCALKMFC.

This sequence belongs to the scoloptoxin-12 family. Contains 3 disulfide bonds. Expressed by the venom gland.

It is found in the secreted. In Scolopendra alternans (Florida Keys giant centipede), this protein is U-scoloptoxin(12)-Sa1a.